The chain runs to 61 residues: Large ribosomal subunit protein eL29 (61 aa).

The segment covering 1–26 (MAKSKNHTNHNQNKKAHRNGIKRPQK) has biased composition (basic residues). The tract at residues 1-32 (MAKSKNHTNHNQNKKAHRNGIKRPQKHRYDSL) is disordered.

It belongs to the eukaryotic ribosomal protein eL29 family. In terms of assembly, component of the large ribosomal subunit (LSU). Mature yeast ribosomes consist of a small (40S) and a large (60S) subunit. The 40S small subunit contains 1 molecule of ribosomal RNA (18S rRNA) and at least 33 different proteins. The large 60S subunit contains 3 rRNA molecules (25S, 5.8S and 5S rRNA) and at least 46 different proteins.

The protein localises to the cytoplasm. It is found in the nucleus. Its subcellular location is the nucleolus. Component of the ribosome, a large ribonucleoprotein complex responsible for the synthesis of proteins in the cell. The small ribosomal subunit (SSU) binds messenger RNAs (mRNAs) and translates the encoded message by selecting cognate aminoacyl-transfer RNA (tRNA) molecules. The large subunit (LSU) contains the ribosomal catalytic site termed the peptidyl transferase center (PTC), which catalyzes the formation of peptide bonds, thereby polymerizing the amino acids delivered by tRNAs into a polypeptide chain. The nascent polypeptides leave the ribosome through a tunnel in the LSU and interact with protein factors that function in enzymatic processing, targeting, and the membrane insertion of nascent chains at the exit of the ribosomal tunnel. This is Large ribosomal subunit protein eL29 (rpl29) from Schizosaccharomyces pombe (strain 972 / ATCC 24843) (Fission yeast).